The primary structure comprises 483 residues: Glutamyl-tRNA(Gln) amidotransferase subunit A (483 aa).

Residues Lys-77 and Ser-152 each act as charge relay system in the active site. The Acyl-ester intermediate role is filled by Ser-176.

The protein belongs to the amidase family. GatA subfamily. Heterotrimer of A, B and C subunits.

It catalyses the reaction L-glutamyl-tRNA(Gln) + L-glutamine + ATP + H2O = L-glutaminyl-tRNA(Gln) + L-glutamate + ADP + phosphate + H(+). In terms of biological role, allows the formation of correctly charged Gln-tRNA(Gln) through the transamidation of misacylated Glu-tRNA(Gln) in organisms which lack glutaminyl-tRNA synthetase. The reaction takes place in the presence of glutamine and ATP through an activated gamma-phospho-Glu-tRNA(Gln). In Listeria monocytogenes serotype 4b (strain F2365), this protein is Glutamyl-tRNA(Gln) amidotransferase subunit A.